Consider the following 204-residue polypeptide: Acyl-homoserine-lactone synthase (204 aa).

The protein belongs to the autoinducer synthase family.

The catalysed reaction is a fatty acyl-[ACP] + S-adenosyl-L-methionine = an N-acyl-L-homoserine lactone + S-methyl-5'-thioadenosine + holo-[ACP] + H(+). Required for the synthesis of acyl-HSL autoinducers that bind to SolR. The sequence is that of Acyl-homoserine-lactone synthase (solI) from Ralstonia solanacearum (Pseudomonas solanacearum).